The primary structure comprises 122 residues: Ribosome-binding factor A (122 aa).

It belongs to the RbfA family. As to quaternary structure, monomer. Binds 30S ribosomal subunits, but not 50S ribosomal subunits or 70S ribosomes.

Its subcellular location is the cytoplasm. In terms of biological role, one of several proteins that assist in the late maturation steps of the functional core of the 30S ribosomal subunit. Associates with free 30S ribosomal subunits (but not with 30S subunits that are part of 70S ribosomes or polysomes). Required for efficient processing of 16S rRNA. May interact with the 5'-terminal helix region of 16S rRNA. The polypeptide is Ribosome-binding factor A (Opitutus terrae (strain DSM 11246 / JCM 15787 / PB90-1)).